We begin with the raw amino-acid sequence, 53 residues long: Mitochondrial sheath formation-associated protein (53 aa).

Mitochondrial intermembrane loops occupy residues 1 to 6 and 1 to 7; these read MIVLGW and MIVLGWM. A run of 2 helical transmembrane segments spans residues 7–23 and 8–24; these read MLFV…PEAM and LFVG…EAMP. Cytoplasmic loops occupy residues 24 to 53 and 25 to 40; these read PPTL…ELLL and PTLK…ENKA.

In terms of assembly, interacts with VDAC3. Testis specific. Detected only in germ cells at the step of spermiogenesis (at protein level). Expressed during the middle steps of spermatid development. In terms of tissue distribution, testis specific. Detected only in germ cells at the step of spermiogenesis (at protein level). Expressed in the late steps of spermatid development.

It localises to the mitochondrion outer membrane. Its function is as follows. Regulates sperm development. May be involved in mitochondrial sheath formation. This Mus musculus (Mouse) protein is Mitochondrial sheath formation-associated protein.